A 444-amino-acid polypeptide reads, in one-letter code: Methylenetetrahydrofolate--tRNA-(uracil-5-)-methyltransferase TrmFO (444 aa).

9-14 (GAGMAG) serves as a coordination point for FAD.

It belongs to the MnmG family. TrmFO subfamily. The cofactor is FAD.

The protein localises to the cytoplasm. It catalyses the reaction uridine(54) in tRNA + (6R)-5,10-methylene-5,6,7,8-tetrahydrofolate + NADH + H(+) = 5-methyluridine(54) in tRNA + (6S)-5,6,7,8-tetrahydrofolate + NAD(+). It carries out the reaction uridine(54) in tRNA + (6R)-5,10-methylene-5,6,7,8-tetrahydrofolate + NADPH + H(+) = 5-methyluridine(54) in tRNA + (6S)-5,6,7,8-tetrahydrofolate + NADP(+). Functionally, catalyzes the folate-dependent formation of 5-methyl-uridine at position 54 (M-5-U54) in all tRNAs. The sequence is that of Methylenetetrahydrofolate--tRNA-(uracil-5-)-methyltransferase TrmFO from Cereibacter sphaeroides (strain ATCC 17023 / DSM 158 / JCM 6121 / CCUG 31486 / LMG 2827 / NBRC 12203 / NCIMB 8253 / ATH 2.4.1.) (Rhodobacter sphaeroides).